Here is a 293-residue protein sequence, read N- to C-terminus: NAD kinase (293 aa).

Aspartate 72 (proton acceptor) is an active-site residue. Residues 72-73, 146-147, arginine 157, arginine 174, aspartate 176, 187-192, and glutamine 247 each bind NAD(+); these read DG, ND, and TAYALS.

It belongs to the NAD kinase family. A divalent metal cation serves as cofactor.

The protein localises to the cytoplasm. The enzyme catalyses NAD(+) + ATP = ADP + NADP(+) + H(+). Its function is as follows. Involved in the regulation of the intracellular balance of NAD and NADP, and is a key enzyme in the biosynthesis of NADP. Catalyzes specifically the phosphorylation on 2'-hydroxyl of the adenosine moiety of NAD to yield NADP. This is NAD kinase from Chromohalobacter salexigens (strain ATCC BAA-138 / DSM 3043 / CIP 106854 / NCIMB 13768 / 1H11).